Reading from the N-terminus, the 517-residue chain is Putative ribose/galactose/methyl galactoside import ATP-binding protein 1 (517 aa).

2 consecutive ABC transporter domains span residues 23 to 258 (LQLQ…VGRP) and 269 to 515 (TPTD…SGRS). 55–62 (GENGAGKS) lines the ATP pocket.

Belongs to the ABC transporter superfamily. Carbohydrate importer 2 (CUT2) (TC 3.A.1.2) family.

The protein localises to the cell inner membrane. The enzyme catalyses D-ribose(out) + ATP + H2O = D-ribose(in) + ADP + phosphate + H(+). It catalyses the reaction D-galactose(out) + ATP + H2O = D-galactose(in) + ADP + phosphate + H(+). Part of an ABC transporter complex involved in carbohydrate import. Could be involved in ribose, galactose and/or methyl galactoside import. Responsible for energy coupling to the transport system. The sequence is that of Putative ribose/galactose/methyl galactoside import ATP-binding protein 1 from Burkholderia ambifaria (strain ATCC BAA-244 / DSM 16087 / CCUG 44356 / LMG 19182 / AMMD) (Burkholderia cepacia (strain AMMD)).